A 155-amino-acid polypeptide reads, in one-letter code: Urease accessory protein UreE (155 aa).

The protein belongs to the UreE family.

The protein localises to the cytoplasm. Its function is as follows. Involved in urease metallocenter assembly. Binds nickel. Probably functions as a nickel donor during metallocenter assembly. In Synechococcus sp. (strain CC9311), this protein is Urease accessory protein UreE.